Consider the following 369-residue polypeptide: C2 calcium-dependent domain-containing protein 4A (369 aa).

Disordered regions lie at residues 151–176 (PRAP…ARRP) and 197–240 (RSRR…PFPE). Positions 153-168 (APGPATPAAPGCPRPP) are enriched in pro residues. A compositionally biased stretch (low complexity) spans 220-237 (SQSPARAPSTSPPSSRVP). Residues 253–369 (AGDALRLAAE…ELSLGALLLL (117 aa)) form the C2 domain.

It belongs to the C2CD4 family. In terms of tissue distribution, specifically expressed in endothelial cells.

It is found in the nucleus. Functionally, may be involved in inflammatory process. May regulate cell architecture and adhesion. This Homo sapiens (Human) protein is C2 calcium-dependent domain-containing protein 4A (C2CD4A).